Consider the following 383-residue polypeptide: Caspase a (383 aa).

Residues 1-142 constitute a propeptide that is removed on maturation; sequence MAKSIKDHLQ…ETYEIKDKSV (142 aa). In terms of domain architecture, Pyrin spans 8-81; it reads HLQDALSNIG…RGIKCNAVAE (74 aa). Residues 87–106 are disordered; sequence TGQGGVSQPEPPVPEPIPKD. Active-site residues include histidine 220 and cysteine 270. Residues 275–296 constitute a propeptide that is removed on maturation; it reads HGRVWASDGEPDEPIEIEDDDF.

It belongs to the peptidase C14A family. Heterotetramer that consists of two anti-parallel arranged heterodimers, each one formed by a 20 kDa (p20) and a 10 kDa (p10) subunit. Interacts (via pyrin domain) with pycard (via pyrin domain). Interacts with caspb. Component of NLRP1 inflammasomes. Inflammasomes are supramolecular complexes that assemble in the cytosol in response to pathogens and other damage-associated signals and play critical roles in innate immunity and inflammation. The NLRP1 inflammasome is composed of the signal sensor nlrp1, and the adapter pycard (asc), which recruit effector pro-inflammatory caspases caspa and/or caspb. The interaction between nlrp1 and pycard is required for the sequential recruitment of caspa and then caspb. Caspa is preferentially recruited first and this causes the cleavage of pro-il1b into the midformed il1b. This is followed by the recruitment of caspb, which is activated and cleaves the midformed il1b resulting in il1b maturation. Interacts with caiap. The two subunits are derived from the precursor sequence by an autocatalytic mechanism.

The protein resides in the inflammasome. It is found in the cytoplasm. The enzyme catalyses Strict requirement for an Asp residue at position P1 and has a preferred cleavage sequence of Tyr-Val-Ala-Asp-|-.. Its function is as follows. Thiol protease which cleaves IL-1 beta (il1b), releasing the mature cytokine which is involved in a variety of inflammatory processes, and mediates apoptosis. Component of the NLRP1 inflammasome, which plays a crucial role in innate immunity and inflammation. In response to pathogens and other damage-associated signals, recruited to the NLRP1 inflammasome in its precursor form. Its subsequent activation causes the cleavage of pro-il1b into the midformed il1b, which then evetually leads to il1b maturation and secretion in the extracellular milieu. Required for the development of the cartilaginous pharyngeal skeleton. The sequence is that of Caspase a from Danio rerio (Zebrafish).